The sequence spans 514 residues: FAD-dependent monooxygenase AacuC (514 aa).

The tract at residues 1 to 29 (MVSNEYLTHGDKDEFDPAKWSSTPGELPP) is disordered. The segment covering 8 to 17 (THGDKDEFDP) has biased composition (basic and acidic residues). Positions 79 and 146 each coordinate FAD. The active site involves Arg-227. FAD is bound by residues Asp-358 and Gly-371.

Belongs to the paxM FAD-dependent monooxygenase family. The cofactor is FAD.

It functions in the pathway secondary metabolite biosynthesis. In terms of biological role, FAD-dependent monooxygenase; part of the gene cluster that mediates the biosynthesis of the tetrahydroxanthone dimer secalonic acid D. The pathway begins with the synthesis of atrochrysone thioester by the polyketide synthase AacuL. The atrochrysone carboxyl ACP thioesterase AacuM then breaks the thioester bond and releases the atrochrysone carboxylic acid from AacuL. Atrochrysone carboxylic acid is decarboxylated by the decarboxylase AacuI, and oxidized by the anthrone oxygenase AacuG to yield emodin. Emodin is then reduced to emodin hydroquinone by a yet unidentified oxidoreductase. A-ring reduction by the short chain dehydrogenase AacuN, dehydration by the scytalone dehydratase-like protein AacuK and probable spontaneous re-oxidation, results in overall deoxygenation to chrysophanol. Baeyer-Villiger oxidation by the Baeyer-Villiger monooxygenase (BVMO) AacuH then yields monodictyphenone. Monodictyphenone is transformed into compounds with the tetrahydroxanthone skeleton via methylesterification by the methyltransferase AacuQ, followed by the action of the flavin-dependent monooxygenase AacuC, the isomerase AacuP, and the short chain dehydrogenase/reductase AacuF or AacuD. AacuF and AacuD should accept the same compound as a substrate but perform the ketoreduction with a different stereoselectivity, thus yielding blennolides B and A, respectively. In the final step of the biosynthesis, the cytochrome P450 monooxygenase AacuE accepts blennolide B and/or blennolide A to conduct the dimerization reaction to furnish the tetrahydroxanthone dimers, secalonic acids D, B, and F. This Aspergillus aculeatus (strain ATCC 16872 / CBS 172.66 / WB 5094) protein is FAD-dependent monooxygenase AacuC.